A 399-amino-acid chain; its full sequence is Enolase (399 aa).

Gln149 serves as a coordination point for (2R)-2-phosphoglycerate. Glu191 (proton donor) is an active-site residue. Positions 227, 268, and 293 each coordinate Mg(2+). 4 residues coordinate (2R)-2-phosphoglycerate: Lys318, Arg347, Ser348, and Lys369. The active-site Proton acceptor is Lys318.

Belongs to the enolase family. Mg(2+) is required as a cofactor.

The protein localises to the cytoplasm. The protein resides in the secreted. Its subcellular location is the cell surface. It catalyses the reaction (2R)-2-phosphoglycerate = phosphoenolpyruvate + H2O. The protein operates within carbohydrate degradation; glycolysis; pyruvate from D-glyceraldehyde 3-phosphate: step 4/5. Functionally, catalyzes the reversible conversion of 2-phosphoglycerate (2-PG) into phosphoenolpyruvate (PEP). It is essential for the degradation of carbohydrates via glycolysis. The protein is Enolase of Archaeoglobus fulgidus (strain ATCC 49558 / DSM 4304 / JCM 9628 / NBRC 100126 / VC-16).